Here is a 248-residue protein sequence, read N- to C-terminus: Myelin protein P0 (248 aa).

Residues 1 to 29 (MAPGAPSSSPSPILAVLLFSSLVLSPAQA) form the signal peptide. Positions 30 to 143 (IVVYTDREVH…DIVGKTSQVT (114 aa)) constitute an Ig-like V-type domain. At 30–153 (IVVYTDREVH…LYVFEKVPTR (124 aa)) the chain is on the extracellular side. C50 and C127 are oxidised to a cystine. N122 carries N-linked (GlcNAc...) (complex) asparagine glycosylation. Residues 154–179 (YGVVLGAVIGGVLGVVLLLLLLFYVV) traverse the membrane as a helical segment. At 180–248 (RYCWLRRQAA…GLGESRKDKK (69 aa)) the chain is on the cytoplasmic side. Residue S210 is modified to Phosphoserine; by PKC. Residues 224 to 248 (DHSRSTKAVSEKKAKGLGESRKDKK) form a disordered region. Residues S226 and S228 each carry the phosphoserine modification. Phosphoserine; by PKC is present on residues S233 and S243.

Belongs to the myelin P0 protein family. In terms of assembly, homodimer and homotetramer. In terms of processing, N-glycosylated; contains sulfate-substituted glycan. Found only in peripheral nervous system Schwann cells.

It localises to the cell membrane. The protein resides in the myelin membrane. Is an adhesion molecule necessary for normal myelination in the peripheral nervous system. It mediates adhesion between adjacent myelin wraps and ultimately drives myelin compaction. The protein is Myelin protein P0 (MPZ) of Homo sapiens (Human).